The sequence spans 224 residues: Phosphoglycolate phosphatase (224 aa).

Asp11 functions as the Nucleophile in the catalytic mechanism. 3 residues coordinate Mg(2+): Asp11, Asp13, and Asp177.

This sequence belongs to the HAD-like hydrolase superfamily. CbbY/CbbZ/Gph/YieH family. It depends on Mg(2+) as a cofactor.

It catalyses the reaction 2-phosphoglycolate + H2O = glycolate + phosphate. Its pathway is organic acid metabolism; glycolate biosynthesis; glycolate from 2-phosphoglycolate: step 1/1. Functionally, specifically catalyzes the dephosphorylation of 2-phosphoglycolate. Is involved in the dissimilation of the intracellular 2-phosphoglycolate formed during the DNA repair of 3'-phosphoglycolate ends, a major class of DNA lesions induced by oxidative stress. This chain is Phosphoglycolate phosphatase, found in Haemophilus influenzae (strain 86-028NP).